We begin with the raw amino-acid sequence, 438 residues long: Elongation factor 1-alpha (438 aa).

Positions 5–228 (KPHLNLVVIG…ALDSLEPPPK (224 aa)) constitute a tr-type G domain. Residues 14–21 (GHVDHGKS) form a G1 region. Residue 14–21 (GHVDHGKS) coordinates GTP. A Mg(2+)-binding site is contributed by S21. Residues 70–74 (GVTIA) are G2. Residues 91–94 (DAPG) are G3. GTP is bound by residues 91–95 (DAPGH) and 153–156 (NKMD). The tract at residues 153–156 (NKMD) is G4. The segment at 194-196 (SAW) is G5.

The protein belongs to the TRAFAC class translation factor GTPase superfamily. Classic translation factor GTPase family. EF-Tu/EF-1A subfamily.

The protein localises to the cytoplasm. It catalyses the reaction GTP + H2O = GDP + phosphate + H(+). Functionally, GTP hydrolase that promotes the GTP-dependent binding of aminoacyl-tRNA to the A-site of ribosomes during protein biosynthesis. This Staphylothermus marinus (strain ATCC 43588 / DSM 3639 / JCM 9404 / F1) protein is Elongation factor 1-alpha.